A 223-amino-acid polypeptide reads, in one-letter code: Fibronectin type III domain-containing protein 10 (223 aa).

Positions 1 to 19 (MRAPPLLLLLAACAPPSGA) are cleaved as a signal peptide. Residues 20–179 (AVDPTPPGWE…FTAEPAAMQE (160 aa)) are Extracellular-facing. The Fibronectin type-III domain occupies 72 to 168 (LASAGGSLRA…VVPPELAECV (97 aa)). N-linked (GlcNAc...) asparagine glycans are attached at residues asparagine 86 and asparagine 109. Residues 180-200 (IVVAMTAVGGSICVMLVVICL) form a helical membrane-spanning segment. Residues 201 to 223 (LVAYITENLMHPTFRRPSLRRQP) lie on the Cytoplasmic side of the membrane.

The protein localises to the membrane. This is Fibronectin type III domain-containing protein 10 (Fndc10) from Mus musculus (Mouse).